Here is a 235-residue protein sequence, read N- to C-terminus: Protein RESISTANCE TO PHYTOPHTHORA 1, chloroplastic (235 aa).

A chloroplast-targeting transit peptide spans Met-1 to Ser-43. A compositionally biased stretch (basic and acidic residues) spans Val-53–Asp-66. Residues Val-53–Val-92 form a disordered region. Transmembrane regions (helical) follow at residues Phe-131 to Phe-151, Ile-158 to Arg-178, Leu-188 to Ser-208, and Val-211 to Leu-231.

The protein localises to the plastid. It is found in the chloroplast. Its subcellular location is the membrane. Plays a positive role in the immune response to the oomycetes P.infestans, including induced oxidative burst and enhanced expression of defense-related genes. The polypeptide is Protein RESISTANCE TO PHYTOPHTHORA 1, chloroplastic (Solanum tuberosum (Potato)).